The primary structure comprises 774 residues: Vezatin (774 aa).

Helical transmembrane passes span 138-158 and 163-183; these read IATP…AVAA and SISS…FTVL. Residues 430–457 are a coiled coil; that stretch reads VRSLQLHLKALLNEVIVLEDELDKLSSC. A compositionally biased stretch (acidic residues) spans 746-757; that stretch reads FGDEWDDDDDNE. The interval 746–774 is disordered; it reads FGDEWDDDDDNEDHDHDKERNNDSSQLEG. Residues 758-767 show a composition bias toward basic and acidic residues; that stretch reads DHDHDKERNN.

Belongs to the vezatin family. In terms of assembly, interacts with myosin VIIa and the cadherin-catenins complex.

The protein resides in the cell membrane. Its subcellular location is the cell junction. It is found in the adherens junction. It localises to the nucleus. Functionally, plays a pivotal role in the establishment of adherens junctions and their maintenance in adult life. In Xenopus laevis (African clawed frog), this protein is Vezatin (vezt).